The primary structure comprises 234 residues: Leucyl/phenylalanyl-tRNA--protein transferase (234 aa).

This sequence belongs to the L/F-transferase family.

It localises to the cytoplasm. It carries out the reaction N-terminal L-lysyl-[protein] + L-leucyl-tRNA(Leu) = N-terminal L-leucyl-L-lysyl-[protein] + tRNA(Leu) + H(+). The enzyme catalyses N-terminal L-arginyl-[protein] + L-leucyl-tRNA(Leu) = N-terminal L-leucyl-L-arginyl-[protein] + tRNA(Leu) + H(+). The catalysed reaction is L-phenylalanyl-tRNA(Phe) + an N-terminal L-alpha-aminoacyl-[protein] = an N-terminal L-phenylalanyl-L-alpha-aminoacyl-[protein] + tRNA(Phe). Functions in the N-end rule pathway of protein degradation where it conjugates Leu, Phe and, less efficiently, Met from aminoacyl-tRNAs to the N-termini of proteins containing an N-terminal arginine or lysine. This is Leucyl/phenylalanyl-tRNA--protein transferase from Pectobacterium atrosepticum (strain SCRI 1043 / ATCC BAA-672) (Erwinia carotovora subsp. atroseptica).